The chain runs to 510 residues: Guanosine import ATP-binding protein NupO (510 aa).

2 consecutive ABC transporter domains span residues 5–240 (IEML…VGRE) and 257–501 (LAID…AGST). 37-44 (GENGAGKS) serves as a coordination point for ATP.

Belongs to the ABC transporter superfamily. As to quaternary structure, the complex is composed of two ATP-binding proteins (NupO), two transmembrane proteins (NupP and NupQ) and a solute-binding protein (NupN).

Its subcellular location is the cell membrane. In terms of biological role, part of an ABC transporter complex involved in the uptake of guanosine. Responsible for energy coupling to the transport system. May be a nucleoside transporter of broad specificity but with various affinities for different substrates. In Bacillus subtilis (strain 168), this protein is Guanosine import ATP-binding protein NupO.